A 275-amino-acid polypeptide reads, in one-letter code: 2,3,4,5-tetrahydropyridine-2,6-dicarboxylate N-succinyltransferase (275 aa).

Arg-104 and Asp-141 together coordinate substrate.

Belongs to the transferase hexapeptide repeat family. Homotrimer.

It localises to the cytoplasm. The catalysed reaction is (S)-2,3,4,5-tetrahydrodipicolinate + succinyl-CoA + H2O = (S)-2-succinylamino-6-oxoheptanedioate + CoA. It participates in amino-acid biosynthesis; L-lysine biosynthesis via DAP pathway; LL-2,6-diaminopimelate from (S)-tetrahydrodipicolinate (succinylase route): step 1/3. The chain is 2,3,4,5-tetrahydropyridine-2,6-dicarboxylate N-succinyltransferase from Mannheimia succiniciproducens (strain KCTC 0769BP / MBEL55E).